Reading from the N-terminus, the 378-residue chain is MGIKGLNSIIQQQVPSAIRPREMKQFFGRRVAIDASMSLYQFLIAVRQADGVQLASADGETTSHLMGMFYRTLRMVDHGLKPCYVFDGKPPVLKAHELDKRTERRKETEQKLAELTEQAEIMKHERRLVKVEQWHVAEAKKLLGLMGIPYVDAPGEAEAQCAELAKKGKVFAAASEDMDTLCYRTPYLLRHLTFSEARKEPIHEIDTELVLQGLGLSQEQLVDLGIMLGCDYCESIKGVGPVTALKLIKEHGSLENIVEFISSGGNAKWKVPENWPYKEARALFLQPDVLDAEGVSLKWEEPKEEELIAFMCKEKGFNEDRIKSGIQKLRKGLKGGVQGRLDSFFKVKPKTTEQLAASARKAQAAKKTNQKGKVLKRR.

Positions 1–105 (MGIKGLNSII…HELDKRTERR (105 aa)) are N-domain. Asp-34 is a Mg(2+) binding site. The DNA site is built by Arg-47 and Arg-71. 5 residues coordinate Mg(2+): Asp-87, Glu-156, Glu-158, Asp-177, and Asp-179. Residues 120 to 251 (EIMKHERRLV…VTALKLIKEH (132 aa)) form an I-domain region. Glu-156 serves as a coordination point for DNA. Residues Gly-229 and Asp-231 each coordinate DNA. Mg(2+) is bound at residue Asp-231. Positions 337–345 (VQGRLDSFF) are interaction with PCNA. The segment covering 356–367 (AASARKAQAAKK) has biased composition (low complexity). The segment at 356–378 (AASARKAQAAKKTNQKGKVLKRR) is disordered. Positions 368–378 (TNQKGKVLKRR) are enriched in basic residues.

Belongs to the XPG/RAD2 endonuclease family. FEN1 subfamily. In terms of assembly, interacts with PCNA. Three molecules of FEN1 bind to one PCNA trimer with each molecule binding to one PCNA monomer. PCNA stimulates the nuclease activity without altering cleavage specificity. Mg(2+) serves as cofactor. Phosphorylated. Phosphorylation upon DNA damage induces relocalization to the nuclear plasma.

It localises to the nucleus. Its subcellular location is the nucleolus. It is found in the nucleoplasm. The protein localises to the mitochondrion. Structure-specific nuclease with 5'-flap endonuclease and 5'-3' exonuclease activities involved in DNA replication and repair. During DNA replication, cleaves the 5'-overhanging flap structure that is generated by displacement synthesis when DNA polymerase encounters the 5'-end of a downstream Okazaki fragment. It enters the flap from the 5'-end and then tracks to cleave the flap base, leaving a nick for ligation. Also involved in the long patch base excision repair (LP-BER) pathway, by cleaving within the apurinic/apyrimidinic (AP) site-terminated flap. Acts as a genome stabilization factor that prevents flaps from equilibrating into structures that lead to duplications and deletions. Also possesses 5'-3' exonuclease activity on nicked or gapped double-stranded DNA, and exhibits RNase H activity. Also involved in replication and repair of rDNA and in repairing mitochondrial DNA. In Eremothecium gossypii (strain ATCC 10895 / CBS 109.51 / FGSC 9923 / NRRL Y-1056) (Yeast), this protein is Flap endonuclease 1.